A 172-amino-acid chain; its full sequence is Gamma-crystallin-4 (172 aa).

2 consecutive Beta/gamma crystallin 'Greek key' domains span residues 1 to 37 and 38 to 80; these read IFFYEERNFQGRCYECSSECSDLSSYFNRCNSIRVES and GNWI…RFIP. The segment at 81 to 85 is connecting peptide; sequence HPHSQ. Beta/gamma crystallin 'Greek key' domains follow at residues 86 to 126 and 127 to 169; these read YKMR…NVSD and GHWM…RRVH.

Belongs to the beta/gamma-crystallin family. In terms of assembly, monomer.

Its function is as follows. Crystallins are the dominant structural components of the vertebrate eye lens. In Xenopus laevis (African clawed frog), this protein is Gamma-crystallin-4 (cryg4).